Here is a 58-residue protein sequence, read N- to C-terminus: Small ribosomal subunit protein bS21 (58 aa).

Residues 31–58 (DLKRIRHHETPVEKYKRKAQQRRRSRRR) form a disordered region. A compositionally biased stretch (basic residues) spans 45–58 (YKRKAQQRRRSRRR).

This sequence belongs to the bacterial ribosomal protein bS21 family.

This chain is Small ribosomal subunit protein bS21, found in Prochlorococcus marinus (strain MIT 9303).